Reading from the N-terminus, the 453-residue chain is tRNA modification GTPase MnmE (453 aa).

Residues R22, E79, and K119 each contribute to the (6S)-5-formyl-5,6,7,8-tetrahydrofolate site. Residues 215–376 form the TrmE-type G domain; that stretch reads GMKVVIAGRP…LKQHLKSLMG (162 aa). N225 serves as a coordination point for K(+). Residues 225–230, 244–250, 269–272, and 334–337 contribute to the GTP site; these read NAGKSS, TEIAGTT, DTAG, and NKAD. S229 contacts Mg(2+). The K(+) site is built by T244, I246, and T249. Residue T250 coordinates Mg(2+). (6S)-5-formyl-5,6,7,8-tetrahydrofolate is bound at residue K453.

This sequence belongs to the TRAFAC class TrmE-Era-EngA-EngB-Septin-like GTPase superfamily. TrmE GTPase family. Homodimer. Heterotetramer of two MnmE and two MnmG subunits. Requires K(+) as cofactor.

It is found in the cytoplasm. Exhibits a very high intrinsic GTPase hydrolysis rate. Involved in the addition of a carboxymethylaminomethyl (cmnm) group at the wobble position (U34) of certain tRNAs, forming tRNA-cmnm(5)s(2)U34. In Shewanella baltica (strain OS195), this protein is tRNA modification GTPase MnmE.